Consider the following 536-residue polypeptide: Phosphoenolpyruvate carboxykinase (ATP) (536 aa).

Substrate is bound by residues Arg-61, Tyr-195, and Lys-201. Residues Lys-201, His-220, and 236–244 each bind ATP; that span reads GLSGTGKTT. Mn(2+) is bound by residues Lys-201 and His-220. Asp-257 is a Mn(2+) binding site. Residues Glu-285, Arg-322, and Thr-447 each contribute to the ATP site. Residue Arg-322 coordinates substrate.

Belongs to the phosphoenolpyruvate carboxykinase (ATP) family. Mn(2+) serves as cofactor.

It localises to the cytoplasm. It catalyses the reaction oxaloacetate + ATP = phosphoenolpyruvate + ADP + CO2. It functions in the pathway carbohydrate biosynthesis; gluconeogenesis. Involved in the gluconeogenesis. Catalyzes the conversion of oxaloacetate (OAA) to phosphoenolpyruvate (PEP) through direct phosphoryl transfer between the nucleoside triphosphate and OAA. This chain is Phosphoenolpyruvate carboxykinase (ATP), found in Brucella anthropi (strain ATCC 49188 / DSM 6882 / CCUG 24695 / JCM 21032 / LMG 3331 / NBRC 15819 / NCTC 12168 / Alc 37) (Ochrobactrum anthropi).